Here is a 641-residue protein sequence, read N- to C-terminus: Calpain-6 (641 aa).

The Calpain catalytic domain maps to 26 to 343 (LFCDPTFLPE…FHKLNVCRNV (318 aa)). The interval 344 to 495 (NNPVFGRKEL…IFSEVPVQLR (152 aa)) is domain III. Residues 498 to 621 (TLDMPKMSCW…YLRKKGGPTA (124 aa)) enclose the C2 domain.

This sequence belongs to the peptidase C2 family. In terms of assembly, interacts (via domain III) with microtubules. Interacts (via domain II) with ARHGEF2 (via the N-terminal zinc finger).

It localises to the cytoplasm. The protein localises to the perinuclear region. Its subcellular location is the cytoskeleton. The protein resides in the spindle. Microtubule-stabilizing protein that may be involved in the regulation of microtubule dynamics and cytoskeletal organization. May act as a regulator of RAC1 activity through interaction with ARHGEF2 to control lamellipodial formation and cell mobility. Does not seem to have protease activity as it has lost the active site residues. This Rattus norvegicus (Rat) protein is Calpain-6 (Capn6).